The chain runs to 308 residues: Phenylcoumaran benzylic ether reductase PT1 (308 aa).

Residues 11-17 (GATGYIG), R36, and K46 contribute to the NADP(+) site. Catalysis depends on K134, which acts as the Proton acceptor. R138 contacts NADP(+).

The protein belongs to the NmrA-type oxidoreductase family. Isoflavone reductase subfamily.

It catalyses the reaction (-)-dehydrodiconiferyl alcohol + NADPH + H(+) = (S)-isodihydrodehydrodiconiferyl alcohol + NADP(+). It carries out the reaction (+)-dehydrodiconiferyl alcohol + NADPH + H(+) = (R)-isodihydrodehydrodiconiferyl alcohol + NADP(+). The catalysed reaction is (2R,3S)-dihydrodehydrodiconiferyl alcohol + NADPH + H(+) = (S)-tetrahydrodehydrodiconiferyl alcohol + NADP(+). The enzyme catalyses (2S,3R)-dihydrodehydrodiconiferyl alcohol + NADPH + H(+) = (R)-tetrahydrodehydrodiconiferyl alcohol + NADP(+). Oxidoreductase involved in lignan biosynthesis. Catalyzes the NADPH-dependent reduction of phenylcoumaran benzylic ethers. Converts dehydrodiconiferyl alcohol (DDC) to isodihydrodehydrodiconiferyl alcohol (IDDDC), and dihydrodehydrodiconiferyl alcohol (DDDC) to tetrahydrodehydrodiconiferyl alcohol (TDDC). This chain is Phenylcoumaran benzylic ether reductase PT1, found in Pinus taeda (Loblolly pine).